A 266-amino-acid polypeptide reads, in one-letter code: Secreted RxLR effector protein 128 (266 aa).

Residues 1 to 18 form the signal peptide; the sequence is MRGAFYTAIALLIGRSQT. The RxLR-dEER motif lies at 48 to 63; that stretch reads RYLRDGLAHSATNEER.

Belongs to the RxLR effector family.

Its subcellular location is the secreted. The protein localises to the host nucleus. Secreted effector that dos not suppress the host cell death induced by cell death-inducing proteins. This Plasmopara viticola (Downy mildew of grapevine) protein is Secreted RxLR effector protein 128.